Here is a 431-residue protein sequence, read N- to C-terminus: Putative F-box/FBD/LRR-repeat protein At3g56780 (431 aa).

The F-box domain occupies 6-62 (CSCINELPDDLILKILSFVSTKHVVVTSLLSKKWKSLWTRVPILKYDVRDHTRFERF). 8 LRR repeats span residues 56–82 (HTRFERFLDKSLFSHQSHVLESLHVEL), 88–113 (NKDIGPWIRTALHHHHCHLRELEIDA), 135–161 (LKGIVIDVEAPLTTVSLPSLKTLHIDH), 162–187 (SSLFDFGSLQMLLSNCNFITDLMVIR), 209–236 (LEGLKDVISISSSSAVCLPLLKTLHVAR), 237–262 (MEDFNNDSFCRLLSNCPVLSDLTLEE), 264–285 (TSDVLLNLDIDMPYLQRLSIIT), and 357–382 (CSERSVEMLVDLLLCFTKLVVLKLEH). The FBD domain maps to 391-423 (RWEPPSLVPECLLSSLEALEWKGYTGRYGDKDL).

The sequence is that of Putative F-box/FBD/LRR-repeat protein At3g56780 from Arabidopsis thaliana (Mouse-ear cress).